The sequence spans 346 residues: Flap endonuclease 1 (346 aa).

Residues 1 to 100 (MGVDIKELVE…KELERRYQIK (100 aa)) are N-domain. 7 residues coordinate Mg(2+): Asp-29, Asp-82, Glu-154, Glu-156, Asp-175, Asp-177, and Asp-238. The interval 118–260 (EARIYAQQTS…KALKLVKELK (143 aa)) is I-domain. Residues 336–344 (KQQSLESWF) are interaction with PCNA.

The protein belongs to the XPG/RAD2 endonuclease family. FEN1 subfamily. In terms of assembly, interacts with PCNA. PCNA stimulates the nuclease activity without altering cleavage specificity. Mg(2+) serves as cofactor.

In terms of biological role, structure-specific nuclease with 5'-flap endonuclease and 5'-3' exonuclease activities involved in DNA replication and repair. During DNA replication, cleaves the 5'-overhanging flap structure that is generated by displacement synthesis when DNA polymerase encounters the 5'-end of a downstream Okazaki fragment. Binds the unpaired 3'-DNA end and kinks the DNA to facilitate 5' cleavage specificity. Cleaves one nucleotide into the double-stranded DNA from the junction in flap DNA, leaving a nick for ligation. Also involved in the base excision repair (BER) pathway. Acts as a genome stabilization factor that prevents flaps from equilibrating into structures that lead to duplications and deletions. Also possesses 5'-3' exonuclease activity on nicked or gapped double-stranded DNA. The polypeptide is Flap endonuclease 1 (Thermofilum pendens (strain DSM 2475 / Hrk 5)).